The primary structure comprises 446 residues: Tol-Pal system protein TolB (446 aa).

An N-terminal signal peptide occupies residues 1–36 (MMDVQTVRRGNAVQSLMSKLILPLVMAVAFALPARA). Residues 424–446 (GYNERPSPTPTFASDPAWSPRIQ) are disordered.

The protein belongs to the TolB family. In terms of assembly, the Tol-Pal system is composed of five core proteins: the inner membrane proteins TolA, TolQ and TolR, the periplasmic protein TolB and the outer membrane protein Pal. They form a network linking the inner and outer membranes and the peptidoglycan layer.

It localises to the periplasm. Part of the Tol-Pal system, which plays a role in outer membrane invagination during cell division and is important for maintaining outer membrane integrity. This Parvibaculum lavamentivorans (strain DS-1 / DSM 13023 / NCIMB 13966) protein is Tol-Pal system protein TolB.